We begin with the raw amino-acid sequence, 1117 residues long: Cytospin-A (1117 aa).

Disordered stretches follow at residues 1 to 176 (MKKA…NQIS), 293 to 323 (SLSPEITPGNQSDGGGTLTSSVEGSAPGSVE), and 358 to 390 (SSDDALDAPSSSESEGIPSIERSRKGSSGNASE). Residues 45–90 (TAASLSKTKSSDDLLAGMAGGVTVTNGVKGKKSTCPSAAPSASAPA) show a composition bias toward low complexity. The segment covering 93-117 (TVENKSKISTGTASSTKRNTSTGNK) has biased composition (polar residues). 2 stretches are compositionally biased toward basic and acidic residues: residues 120-131 (SSTRERLRERTR) and 158-171 (TATECDVRMSKSKS). A coiled-coil region spans residues 168–280 (KSKSDNQISD…LNALGFSLEQ (113 aa)). The segment covering 293 to 303 (SLSPEITPGNQ) has biased composition (polar residues). Residues 358 to 377 (SSDDALDAPSSSESEGIPSI) are compositionally biased toward low complexity. 3 positions are modified to phosphoserine: S384, S385, and S389. Coiled-coil stretches lie at residues 394 to 449 (ACLT…MESL) and 487 to 807 (RYME…RGRV). Residues S868, S881, and S887 each carry the phosphoserine modification. Residues 919–1001 (RTSSASRPAS…SRIREERKDP (83 aa)) are disordered. Residues 946–956 (RSSEEMKRDIS) show a composition bias toward basic and acidic residues. Over residues 971 to 990 (TTSPQLSLSSSPTASVTPTT) the composition is skewed to low complexity. One can recognise a Calponin-homology (CH) domain in the interval 1011 to 1116 (GSKRNALLKW…YVTAIYKYFE (106 aa)).

It belongs to the cytospin-A family. As to quaternary structure, may interact with both microtubules and actin cytoskeleton.

Its subcellular location is the cytoplasm. It is found in the cytoskeleton. It localises to the spindle. The protein resides in the cell junction. The protein localises to the gap junction. Involved in cytokinesis and spindle organization. May play a role in actin cytoskeleton organization and microtubule stabilization and hence required for proper cell adhesion and migration. This chain is Cytospin-A (SPECC1L), found in Pan troglodytes (Chimpanzee).